The chain runs to 464 residues: Soluble pyridine nucleotide transhydrogenase (464 aa).

Residue 35–44 coordinates FAD; sequence DDRRQVGGNC.

It belongs to the class-I pyridine nucleotide-disulfide oxidoreductase family. The cofactor is FAD.

It is found in the cytoplasm. The catalysed reaction is NAD(+) + NADPH = NADH + NADP(+). Its function is as follows. Conversion of NADPH, generated by peripheral catabolic pathways, to NADH, which can enter the respiratory chain for energy generation. This is Soluble pyridine nucleotide transhydrogenase from Pseudomonas putida (strain ATCC 47054 / DSM 6125 / CFBP 8728 / NCIMB 11950 / KT2440).